Here is a 401-residue protein sequence, read N- to C-terminus: MVRINEHYIEISNSYLFAEIAERVNEYKQNNKNREVISLGIGDVTQAIAPAVVEAIHKATNEMACTKTLRGYAPYEGYDFLIQAILKNDFTDKGISIEADEIFVNDGAKSDTGNIGDILGQDNHIAITDPAYPVYVDTNRMAGRTIELLPCTPENYFVPNFPRKTADVIYLCYPNNPTGIALNAAQLKNWVDYALTNKSLILFDAAYEAYISQQDVPHSIYEISDAKKVAIEFRSFSKTAGFTGLRAGYTIVPKELIIQTSKGKMLSLNAMWRRRQSTKFNGTAYIVQRGAEAVYSIEGQKQIRKAIDYYRGNALTIKEGLESLGVTTYGGINAPYIWVKTPNNLTSWEFFDLLLNKIQVIGTPGDGFGQAGKGFFRFTAFGNKEDTLEAVLRMKKLLEFH.

Positions 15 and 42 each coordinate substrate. Pyridoxal 5'-phosphate contacts are provided by residues Tyr-72, 108-109 (AK), Tyr-132, Asn-176, Tyr-207, and 235-237 (SFS). Residues Lys-109, Tyr-132, and Asn-176 each coordinate substrate. Lys-238 carries the N6-(pyridoxal phosphate)lysine modification. 2 residues coordinate pyridoxal 5'-phosphate: Arg-246 and Asn-281. Asn-281 and Arg-377 together coordinate substrate.

It belongs to the class-I pyridoxal-phosphate-dependent aminotransferase family. LL-diaminopimelate aminotransferase subfamily. In terms of assembly, homodimer. It depends on pyridoxal 5'-phosphate as a cofactor.

It carries out the reaction (2S,6S)-2,6-diaminopimelate + 2-oxoglutarate = (S)-2,3,4,5-tetrahydrodipicolinate + L-glutamate + H2O + H(+). Its pathway is amino-acid biosynthesis; L-lysine biosynthesis via DAP pathway; LL-2,6-diaminopimelate from (S)-tetrahydrodipicolinate (aminotransferase route): step 1/1. Functionally, involved in the synthesis of meso-diaminopimelate (m-DAP or DL-DAP), required for both lysine and peptidoglycan biosynthesis. Catalyzes the direct conversion of tetrahydrodipicolinate to LL-diaminopimelate. The chain is LL-diaminopimelate aminotransferase from Azobacteroides pseudotrichonymphae genomovar. CFP2.